The primary structure comprises 269 residues: MKTPVELAVSGIQTLPLQHRCRGSHRVKARASYVDESLFGSPAGTRPTPPDFDPPWVEKANRTSGVGTGTSRASGANGSCETTSSSGSTPTLTPRKKNKYRLISHTPSYCDESLFGSRPEGTNWEGPWMAKGDAAKLHSLFWTPPATPRGSHSPRPRETPLRAIHPAGPSKTEPKVAADSQKLSTDGLDSPHPLRRERSHSLTHLNVPRTGRPPTSGPHTNGPRDPRPSPSGVTLQSPLVTPRARSVRISVPATPQRGGATQKPKPPWK.

The Nuclear export signal motif lies at 5-17; the sequence is VELAVSGIQTLPL. Disordered stretches follow at residues 37 to 101 and 141 to 269; these read SLFG…NKYR and FWTP…PPWK. Over residues 62–77 the composition is skewed to polar residues; the sequence is RTSGVGTGTSRASGAN. Residues 79–93 are compositionally biased toward low complexity; that stretch reads SCETTSSSGSTPTLT. A Nuclear localization signal motif is present at residues 92 to 108; that stretch reads LTPRKKNKYRLISHTPS. Residues 128 to 156 form an interaction with RBPJ/RBPSUH region; it reads WMAKGDAAKLHSLFWTPPATPRGSHSPRP. Residues 156–269 form an interaction with tubulin region; it reads PRETPLRAIH…ATQKPKPPWK (114 aa).

It belongs to the RITA family. In terms of assembly, interacts with RBPJ/RBPSUH.

The protein localises to the cytoplasm. The protein resides in the nucleus. Its subcellular location is the cytoskeleton. It localises to the microtubule organizing center. It is found in the centrosome. In terms of biological role, tubulin-binding protein that acts as a negative regulator of Notch signaling pathway. Shuttles between the cytoplasm and the nucleus and mediates the nuclear export of RBPJ/RBPSUH, thereby preventing the interaction between RBPJ/RBPSUH and NICD product of Notch proteins (Notch intracellular domain), leading to down-regulate Notch-mediated transcription. May play a role in neurogenesis. The sequence is that of RBPJ-interacting and tubulin-associated protein 1 (RITA1) from Ailuropoda melanoleuca (Giant panda).